Here is a 187-residue protein sequence, read N- to C-terminus: ECF RNA polymerase sigma factor SigW (187 aa).

The interval 3–95 is sigma-70 factor domain-2; it reads MMIKKRIKQV…RKKKPDYYLD (93 aa). A Polymerase core binding motif is present at residues 47 to 50; it reads DIAQ. The sigma-70 factor domain-4 stretch occupies residues 125–187; that stretch reads ELSNTIQQKI…EALRKQLRDL (63 aa). A DNA-binding region (H-T-H motif) is located at residues 166–184; it reads VGTVKTRIHRGREALRKQL.

It belongs to the sigma-70 factor family. ECF subfamily. As to quaternary structure, interacts transiently with the RNA polymerase catalytic core formed by RpoA, RpoB, RpoC and RpoZ (2 alpha, 1 beta, 1 beta' and 1 omega subunit) to form the RNA polymerase holoenzyme that can initiate transcription. Forms a heterodimer with cognate anti-sigma factor RsiW, which prevents it from binding to the -10 and -35 promoter elements.

With respect to regulation, extracytoplasmic function (ECF) sigma factors are held in an inactive form by a cognate anti-sigma factor (RsiW for this protein) until released by regulated membrane proteolysis (RIP). RIP occurs when an extracytoplasmic signal (envelope stress) triggers a concerted proteolytic cascade to transmit information and elicit cellular responses. The anti-sigma factor RsiW is a membrane protein, binding sigma-W in the cytoplasm. RsiW is first cut extracytoplasmically (site-1 protease, S1P, by PrsW), then within the membrane itself (site-2 protease, S2P, by RasP), while cytoplasmic proteases (predominantly ClpX-ClpP) finish degrading the regulatory protein, liberating sigma-W. Functionally, sigma factors are initiation factors that promote the attachment of RNA polymerase (RNAP) to specific initiation sites and are then released. Sigma-W controls genes involved in response to cell envelope stress such as antimicrobial peptides, alkaline pH, transport processes and detoxification. This is ECF RNA polymerase sigma factor SigW (sigW) from Bacillus subtilis (strain 168).